Here is a 63-residue protein sequence, read N- to C-terminus: Large ribosomal subunit protein uL29 (63 aa).

This sequence belongs to the universal ribosomal protein uL29 family.

The protein is Large ribosomal subunit protein uL29 of Pseudoalteromonas translucida (strain TAC 125).